A 466-amino-acid chain; its full sequence is Glycylpeptide N-tetradecanoyltransferase (466 aa).

The segment at 1 to 21 is disordered; it reads MDNENNKNTKNSQQDSSFSEG. Polar residues predominate over residues 8–19; the sequence is NTKNSQQDSSFS. Ser-17 carries the post-translational modification Phosphoserine. Tetradecanoyl-CoA-binding positions include 51–54, 185–187, and 193–197; these read FKFW, LCI, and SKRLT. Residue Ile-466 is the Proton acceptor; via carboxylate of the active site.

The protein belongs to the NMT family. As to quaternary structure, monomer.

The protein resides in the cytoplasm. It carries out the reaction N-terminal glycyl-[protein] + tetradecanoyl-CoA = N-tetradecanoylglycyl-[protein] + CoA + H(+). In terms of biological role, adds a myristoyl group to the N-terminal glycine residue of certain cellular proteins. The protein is Glycylpeptide N-tetradecanoyltransferase (nmt1) of Schizosaccharomyces pombe (strain 972 / ATCC 24843) (Fission yeast).